The following is a 380-amino-acid chain: Cytochrome b (380 aa).

Transmembrane regions (helical) follow at residues 34 to 54, 78 to 99, 114 to 134, and 179 to 199; these read FGSLLAVCLITQILTGLLLAM, WLIRNLHANGASFFFICIFLHI, WNTGVILLLTLMATAFVGYVL, and FFALHFLLPFVIAGITIIHLT. Histidine 84 and histidine 98 together coordinate heme b. Histidine 183 and histidine 197 together coordinate heme b. An a ubiquinone-binding site is contributed by histidine 202. The next 4 membrane-spanning stretches (helical) occupy residues 227-247, 289-309, 321-341, and 348-368; these read IKDILGLTLMFTPFLMLALFS, LGGVLALAASVLILLLIPFLH, LSQTLFWLLVANLLILTWIGS, and FIIIGQMASLSYFSILLILFP.

The protein belongs to the cytochrome b family. As to quaternary structure, the cytochrome bc1 complex contains 11 subunits: 3 respiratory subunits (MT-CYB, CYC1 and UQCRFS1), 2 core proteins (UQCRC1 and UQCRC2) and 6 low-molecular weight proteins (UQCRH/QCR6, UQCRB/QCR7, UQCRQ/QCR8, UQCR10/QCR9, UQCR11/QCR10 and a cleavage product of UQCRFS1). This cytochrome bc1 complex then forms a dimer. Requires heme b as cofactor.

It localises to the mitochondrion inner membrane. Its function is as follows. Component of the ubiquinol-cytochrome c reductase complex (complex III or cytochrome b-c1 complex) that is part of the mitochondrial respiratory chain. The b-c1 complex mediates electron transfer from ubiquinol to cytochrome c. Contributes to the generation of a proton gradient across the mitochondrial membrane that is then used for ATP synthesis. This is Cytochrome b (MT-CYB) from Alectoris rufa (Red-legged partridge).